A 1138-amino-acid chain; its full sequence is uncharacterized protein (1138 aa).

Disordered stretches follow at residues 985–1015 (EKKLPTHETNSEIEKEKHSDGKRKESKMAQE) and 1094–1138 (LVAT…QNKL). Over residues 1110 to 1138 (DDDEYEKYDSGIEDIETDVDEEEEVQNKL) the composition is skewed to acidic residues.

This is an uncharacterized protein from Ostreid herpesvirus 1 (isolate France) (OsHV-1).